The sequence spans 347 residues: Dihydroorotate dehydrogenase (quinone) (347 aa).

FMN-binding positions include 61 to 65 and threonine 85; that span reads AGLDK. Lysine 65 is a binding site for substrate. 110 to 114 contributes to the substrate binding site; that stretch reads NRMGF. The FMN site is built by asparagine 138 and asparagine 171. Asparagine 171 contacts substrate. Catalysis depends on serine 174, which acts as the Nucleophile. Asparagine 176 is a substrate binding site. 2 residues coordinate FMN: lysine 216 and threonine 244. A substrate-binding site is contributed by 245-246; the sequence is NT. Residues glycine 267, glycine 296, and 317–318 contribute to the FMN site; that span reads YT.

This sequence belongs to the dihydroorotate dehydrogenase family. Type 2 subfamily. Monomer. FMN is required as a cofactor.

Its subcellular location is the cell membrane. The enzyme catalyses (S)-dihydroorotate + a quinone = orotate + a quinol. It functions in the pathway pyrimidine metabolism; UMP biosynthesis via de novo pathway; orotate from (S)-dihydroorotate (quinone route): step 1/1. In terms of biological role, catalyzes the conversion of dihydroorotate to orotate with quinone as electron acceptor. The sequence is that of Dihydroorotate dehydrogenase (quinone) from Azotobacter vinelandii (strain DJ / ATCC BAA-1303).